Here is a 455-residue protein sequence, read N- to C-terminus: Probable glycine dehydrogenase (decarboxylating) subunit 1 (455 aa).

This sequence belongs to the GcvP family. N-terminal subunit subfamily. As to quaternary structure, the glycine cleavage system is composed of four proteins: P, T, L and H. In this organism, the P 'protein' is a heterodimer of two subunits.

The enzyme catalyses N(6)-[(R)-lipoyl]-L-lysyl-[glycine-cleavage complex H protein] + glycine + H(+) = N(6)-[(R)-S(8)-aminomethyldihydrolipoyl]-L-lysyl-[glycine-cleavage complex H protein] + CO2. Its function is as follows. The glycine cleavage system catalyzes the degradation of glycine. The P protein binds the alpha-amino group of glycine through its pyridoxal phosphate cofactor; CO(2) is released and the remaining methylamine moiety is then transferred to the lipoamide cofactor of the H protein. The protein is Probable glycine dehydrogenase (decarboxylating) subunit 1 of Francisella tularensis subsp. holarctica (strain LVS).